The chain runs to 1588 residues: Paternally-expressed gene 3 protein (1588 aa).

Residues His-46–Tyr-128 form the SCAN box domain. 3 disordered regions span residues Tyr-128–Gln-230, Asp-266–Ile-306, and Lys-319–Asp-349. The segment covering Gln-129–Asp-142 has biased composition (acidic residues). 4 stretches are compositionally biased toward basic and acidic residues: residues Asp-143–Ser-152, Ser-161–Ser-182, Phe-206–Asp-225, and Pro-295–Ile-306. 3 C2H2-type zinc fingers span residues Tyr-454 to His-476, Phe-507 to His-529, and Tyr-565 to His-587. Positions Phe-588–Thr-607 are enriched in basic and acidic residues. Residues Phe-588–Pro-610 are disordered. The segment at Tyr-627–His-649 adopts a C2H2-type 4 zinc-finger fold. Residues Leu-838–Arg-930 form a disordered region. A compositionally biased stretch (basic and acidic residues) spans Leu-868–Pro-881. A C2H2-type 5 zinc finger spans residues Tyr-969 to His-991. Positions Glu-1056–Asp-1104 are disordered. Basic and acidic residues predominate over residues Glu-1071–Glu-1082. 5 C2H2-type zinc fingers span residues Tyr-1107–His-1129, Tyr-1163–His-1185, Ile-1225–His-1247, Phe-1282–His-1304, and Tyr-1332–His-1354. The interval Glu-1393–Asp-1495 is disordered. Acidic residues predominate over residues Ala-1395–Ala-1415. Repeat copies occupy residues Pro-1397–Glu-1403, Pro-1404–Glu-1410, Pro-1411–Glu-1417, Pro-1418–Ala-1422, Pro-1425–Ala-1429, Pro-1432–Ala-1436, and Pro-1439–Ala-1443. Positions Pro-1397–Glu-1417 are 3 X 7 AA repeat of P-E-V-E-A-A-E. A 4 X 5 AA repeat of P-X-G-E-A region spans residues Pro-1418–Ala-1443. Acidic residues-rich tracts occupy residues Asp-1449–Glu-1466 and Pro-1475–Asp-1495. C2H2-type zinc fingers lie at residues Tyr-1505 to His-1527 and Phe-1564 to His-1586.

This sequence belongs to the krueppel C2H2-type zinc-finger protein family. As to quaternary structure, homodimer. Interacts with SIAH1A and SIAH2. Interacts with TRAF2.

It localises to the nucleus. The protein resides in the cytoplasm. Induces apoptosis in cooperation with SIAH1A. Acts as a mediator between p53/TP53 and BAX in a neuronal death pathway that is activated by DNA damage. Acts synergistically with TRAF2 and inhibits TNF induced apoptosis through activation of NF-kappa-B. The protein is Paternally-expressed gene 3 protein (PEG3) of Pan paniscus (Pygmy chimpanzee).